The primary structure comprises 329 residues: Malate dehydrogenase (329 aa).

Residue Gly-12–Gly-18 coordinates NAD(+). Residues Arg-93 and Arg-99 each contribute to the substrate site. NAD(+) contacts are provided by residues Asn-106, Gln-113, and Val-130–Asn-132. Substrate contacts are provided by Asn-132 and Arg-163. Catalysis depends on His-188, which acts as the Proton acceptor.

Belongs to the LDH/MDH superfamily. MDH type 2 family.

The enzyme catalyses (S)-malate + NAD(+) = oxaloacetate + NADH + H(+). Functionally, catalyzes the reversible oxidation of malate to oxaloacetate. This Frankia alni (strain DSM 45986 / CECT 9034 / ACN14a) protein is Malate dehydrogenase.